A 127-amino-acid chain; its full sequence is Fluoride-specific ion channel FluC (127 aa).

The next 4 helical transmembrane spans lie at 2–22 (LSSL…RWAI), 35–55 (LGTL…IAIF), 68–88 (LITT…LEVV), and 104–124 (LLNL…VVWI). 2 residues coordinate Na(+): Gly-75 and Thr-78.

Belongs to the fluoride channel Fluc/FEX (TC 1.A.43) family.

Its subcellular location is the cell inner membrane. The catalysed reaction is fluoride(in) = fluoride(out). Its activity is regulated as follows. Na(+) is not transported, but it plays an essential structural role and its presence is essential for fluoride channel function. Its function is as follows. Fluoride-specific ion channel. Important for reducing fluoride concentration in the cell, thus reducing its toxicity. The chain is Fluoride-specific ion channel FluC from Serratia proteamaculans (strain 568).